The primary structure comprises 619 residues: Sodium-dependent dopamine transporter (619 aa).

At 1-56 (MSKSKCSVGPMSSVVAPAKEPNAVGPREVELILVKEQNGVQLTNSTLINPPQTPVE) the chain is on the cytoplasmic side. Residues 57–95 (VQERETWSKKIDFLLSVIGFAVDLANVWRFPYLCYKNGG) traverse the membrane as a discontinuously helical segment. Positions 75, 77, 78, 79, and 82 each coordinate Na(+). Residue D79 coordinates dopamine. A run of 2 helical transmembrane segments spans residues 96-127 (GAFL…NREG) and 128-171 (AAGV…FSSF). S149 and G153 together coordinate dopamine. The Extracellular segment spans residues 172–235 (TMDLPWIHCN…SRGIDDLGPP (64 aa)). A disulfide bridge connects residues C180 and C189. N-linked (GlcNAc...) asparagine glycosylation is found at N181, N188, N196, and N204. 2 consecutive transmembrane segments (helical) span residues 236–255 (RWQL…FSLW) and 256–286 (KGVK…GVTL). Residues 287 to 305 (PGAMDGIRAYLSVDFYRLC) lie on the Extracellular side of the membrane. A discontinuously helical transmembrane segment spans residues 306 to 334 (EASVWIDAATQVCFSLGVGFGVLIAFSSY). Residue Q316 participates in chloride binding. F319 contributes to the dopamine binding site. S320 and N352 together coordinate Na(+). S320 is a chloride binding site. The chain crosses the membrane as a helical span at residues 335–375 (NKFTNNCYRDAIITTSINSLTSFSSGFVVFSFLGYMAQKHN). S356 is a chloride binding site. The Extracellular segment spans residues 376-399 (VPIRDVATDGPGLIFIIYPEAIAT). 3 helical membrane-spanning segments follow: residues 400–441 (LPLS…QLLH), 442–465 (RHRE…CVTN), and 466–498 (GGIY…AWFY). Na(+)-binding residues include L417, D420, and S421. Positions 421 and 422 each coordinate dopamine. Over 499–515 (GVQQFSDDIKQMTGQRP) the chain is Cytoplasmic. A helical membrane pass occupies residues 516-541 (NLYWRLCWKLVSPCFLLYVVVVSIVT). At 542-552 (FRPPHYGAYIF) the chain is on the extracellular side. Residues 553 to 582 (PDWANALGWIIATSSMAMVPIYATYKFCSL) form a helical membrane-spanning segment. An interaction with TGFB1I1 region spans residues 560–589 (GWIIATSSMAMVPIYATYKFCSLPGSFREK). Topologically, residues 583 to 619 (PGSFREKLAYAITPEKDRQLVDRGEVRQFTLRHWLLV) are cytoplasmic.

This sequence belongs to the sodium:neurotransmitter symporter (SNF) (TC 2.A.22) family. SLC6A3 subfamily. Monomer. Homooligomer; disulfide-linked. Interacts with PRKCABP and TGFB1I1. Interacts (via N-terminus) with SYNGR3 (via N-terminus). Interacts with SLC18A2. Interacts with TOR1A (ATP-bound); TOR1A regulates SLC6A3 subcellular location. Interacts with alpha-synuclein/SNCA. Interacts with SEPTIN4. Found in the substantia nigra and ventral tegmental dopamine neurons, in fibers of the medial forebrain bundle ascending into the striatum, and within dense fiber networks and varicosities in the dorsal and ventral striatum (at protein level). Lower expression in the cortex (at protein level). Absent from the corpus callosum. Expressed throughout the retina at postnatal day 8.

Its subcellular location is the cell membrane. The protein localises to the cell projection. The protein resides in the neuron projection. It localises to the axon. The catalysed reaction is dopamine(out) + chloride(out) + Na(+)(out) = dopamine(in) + chloride(in) + Na(+)(in). It catalyses the reaction (R)-noradrenaline(out) + chloride(out) + Na(+)(out) = (R)-noradrenaline(in) + chloride(in) + Na(+)(in). The enzyme catalyses dopamine(out) + chloride(out) + 2 Na(+)(out) = dopamine(in) + chloride(in) + 2 Na(+)(in). Inhibited by amphetamine, bupropion, cocaine and ritalin. Inhibited by zinc ions. In terms of biological role, mediates sodium- and chloride-dependent transport of dopamine. Also mediates sodium- and chloride-dependent transport of norepinephrine (also known as noradrenaline). Regulator of light-dependent retinal hyaloid vessel regression, downstream of OPN5 signaling. This Mus musculus (Mouse) protein is Sodium-dependent dopamine transporter (Slc6a3).